Here is a 491-residue protein sequence, read N- to C-terminus: N-succinylglutamate 5-semialdehyde dehydrogenase (491 aa).

An NAD(+)-binding site is contributed by 223 to 228; sequence GSANTG. Active-site residues include Glu-246 and Cys-280.

Belongs to the aldehyde dehydrogenase family. AstD subfamily.

The enzyme catalyses N-succinyl-L-glutamate 5-semialdehyde + NAD(+) + H2O = N-succinyl-L-glutamate + NADH + 2 H(+). It functions in the pathway amino-acid degradation; L-arginine degradation via AST pathway; L-glutamate and succinate from L-arginine: step 4/5. Its function is as follows. Catalyzes the NAD-dependent reduction of succinylglutamate semialdehyde into succinylglutamate. This chain is N-succinylglutamate 5-semialdehyde dehydrogenase, found in Photorhabdus laumondii subsp. laumondii (strain DSM 15139 / CIP 105565 / TT01) (Photorhabdus luminescens subsp. laumondii).